Consider the following 264-residue polypeptide: Glutamate racemase (264 aa).

Substrate is bound by residues 10-11 and 42-43; these read DS and YG. Cys-73 functions as the Proton donor/acceptor in the catalytic mechanism. Substrate is bound at residue 74 to 75; sequence NT. Cys-183 (proton donor/acceptor) is an active-site residue. 184–185 is a substrate binding site; that stretch reads TH.

Belongs to the aspartate/glutamate racemases family.

It catalyses the reaction L-glutamate = D-glutamate. Its pathway is cell wall biogenesis; peptidoglycan biosynthesis. Its function is as follows. Provides the (R)-glutamate required for cell wall biosynthesis. This chain is Glutamate racemase, found in Streptococcus pyogenes serotype M3 (strain ATCC BAA-595 / MGAS315).